Here is a 502-residue protein sequence, read N- to C-terminus: ATP synthase subunit alpha (502 aa).

The tract at residues 117-139 is disordered; it reads GMGPVLTSKTRPIESPAPGVMDR. Position 169–176 (169–176) interacts with ATP; the sequence is GDRQTGKT.

It belongs to the ATPase alpha/beta chains family. In terms of assembly, F-type ATPases have 2 components, CF(1) - the catalytic core - and CF(0) - the membrane proton channel. CF(1) has five subunits: alpha(3), beta(3), gamma(1), delta(1), epsilon(1). CF(0) has three main subunits: a(1), b(2) and c(9-12). The alpha and beta chains form an alternating ring which encloses part of the gamma chain. CF(1) is attached to CF(0) by a central stalk formed by the gamma and epsilon chains, while a peripheral stalk is formed by the delta and b chains.

It localises to the cell membrane. The catalysed reaction is ATP + H2O + 4 H(+)(in) = ADP + phosphate + 5 H(+)(out). Its function is as follows. Produces ATP from ADP in the presence of a proton gradient across the membrane. The alpha chain is a regulatory subunit. In Bacillus licheniformis (strain ATCC 14580 / DSM 13 / JCM 2505 / CCUG 7422 / NBRC 12200 / NCIMB 9375 / NCTC 10341 / NRRL NRS-1264 / Gibson 46), this protein is ATP synthase subunit alpha.